We begin with the raw amino-acid sequence, 185 residues long: Serine/arginine-rich splicing factor RSZ21 (185 aa).

The RRM domain occupies Ala2–Ser73. Residues Met86–Leu103 form a CCHC-type zinc finger. A disordered region spans residues Arg104–Ser185. The span at Gly113–Ser123 shows a compositional bias: basic residues. Composition is skewed to low complexity over residues Arg124–Ser138 and Val151–Ser162.

The protein belongs to the splicing factor SR family. Extensively phosphorylated on serine residues in the RS domain. In terms of tissue distribution, expressed in roots, leaves and immature seeds.

Its subcellular location is the nucleus. Its function is as follows. Involved in pre-mRNA splicing. The sequence is that of Serine/arginine-rich splicing factor RSZ21 (RSZP21) from Oryza sativa subsp. japonica (Rice).